The primary structure comprises 505 residues: Maturase K (505 aa).

Belongs to the intron maturase 2 family. MatK subfamily.

It localises to the plastid. Its subcellular location is the chloroplast. Functionally, usually encoded in the trnK tRNA gene intron. Probably assists in splicing its own and other chloroplast group II introns. The protein is Maturase K of Sciadopitys verticillata (Japanese umbrella-pine).